Here is a 906-residue protein sequence, read N- to C-terminus: Valine--tRNA ligase (906 aa).

The 'HIGH' region signature appears at P43–H53. Residues K548 to S552 carry the 'KMSKS' region motif. ATP is bound at residue K551. The stretch at E842–V905 forms a coiled coil.

Belongs to the class-I aminoacyl-tRNA synthetase family. ValS type 1 subfamily. In terms of assembly, monomer.

It localises to the cytoplasm. The catalysed reaction is tRNA(Val) + L-valine + ATP = L-valyl-tRNA(Val) + AMP + diphosphate. Functionally, catalyzes the attachment of valine to tRNA(Val). As ValRS can inadvertently accommodate and process structurally similar amino acids such as threonine, to avoid such errors, it has a 'posttransfer' editing activity that hydrolyzes mischarged Thr-tRNA(Val) in a tRNA-dependent manner. This chain is Valine--tRNA ligase, found in Caulobacter vibrioides (strain ATCC 19089 / CIP 103742 / CB 15) (Caulobacter crescentus).